The primary structure comprises 247 residues: Probable membrane transporter protein y4hK (247 aa).

6 helical membrane-spanning segments follow: residues 5–25 (AIGLAIAFFVIALAYAAVGQA), 31–51 (IAAMALSGFSPLAIKPTALAL), 74–94 (VYPFAILGFPASALGGSVHLP), 121–141 (SALVITIPKTPPLHAALITGA), 202–222 (FLPWWLIAVAAGGSIGALIGS), and 227–247 (ASWLRVILSVLLMVSGLKLLW).

Belongs to the 4-toluene sulfonate uptake permease (TSUP) (TC 2.A.102) family.

The protein localises to the cell membrane. This is Probable membrane transporter protein y4hK from Sinorhizobium fredii (strain NBRC 101917 / NGR234).